A 152-amino-acid chain; its full sequence is MSCMGAAVNIITTDGPAGRAGFTASAVCSVTDTPPTLLVCLNRGASVWPVFNENRTLCVNTLSAGQEPLSNLFGGKTPMEHRFAAARWQTGVTGCPQLEEALVSFDCRISQVVSVGTHDILFCAIEAIHRHATPYGLVWFDRSYHALMRPAC.

The protein belongs to the non-flavoprotein flavin reductase family. RutF subfamily.

The catalysed reaction is FMNH2 + NAD(+) = FMN + NADH + 2 H(+). Catalyzes the reduction of FMN to FMNH2 which is used to reduce pyrimidine by RutA via the Rut pathway. This is FMN reductase (NADH) RutF from Shigella dysenteriae serotype 1 (strain Sd197).